The sequence spans 125 residues: UPF0734 protein DDB_G0273871/DDB_G0273177 (125 aa).

This sequence belongs to the UPF0734 family.

The protein is UPF0734 protein DDB_G0273871/DDB_G0273177 of Dictyostelium discoideum (Social amoeba).